The chain runs to 108 residues: Nucleoid-associated protein HEAR1046 (108 aa).

The tract at residues 86 to 108 is disordered; sequence TSQEKMAGATAGMPMPPGFKMPF. Residues 99–108 show a composition bias toward pro residues; that stretch reads PMPPGFKMPF.

The protein belongs to the YbaB/EbfC family. As to quaternary structure, homodimer.

It is found in the cytoplasm. The protein resides in the nucleoid. Functionally, binds to DNA and alters its conformation. May be involved in regulation of gene expression, nucleoid organization and DNA protection. This Herminiimonas arsenicoxydans protein is Nucleoid-associated protein HEAR1046.